A 794-amino-acid polypeptide reads, in one-letter code: Signal transducer and activator of transcription 5A (794 aa).

Residue Tyr90 is modified to Phosphotyrosine. Phosphoserine occurs at positions 128 and 193. Positions 589 to 686 (WNDGAILGFV…EVFSKYYTPV (98 aa)) constitute an SH2 domain. Tyr682 carries the phosphotyrosine modification. Tyr694 is subject to Phosphotyrosine; by JAK2. The interval 773-794 (DSLDSRLSPPAGLFTSARGSLS) is disordered. Ser780 bears the Phosphoserine mark.

This sequence belongs to the transcription factor STAT family. Forms a homodimer or a heterodimer with a related family member. Binds NR3C1. Interacts with NCOA1 and SOCS7. Interacts with ERBB4. Interacts with EBF4. Interacts with CD69. Post-translationally, tyrosine phosphorylated in response to KITLG/SCF, IL2, IL3, IL7, IL15, CSF2/GMCSF, GH1, PRL, EPO and THPO. Activated KIT promotes phosphorylation on tyrosine residues and subsequent translocation to the nucleus. Tyrosine phosphorylated in response to constitutively activated FGFR1, FGFR2, FGFR3 and FGFR4. Tyrosine phosphorylation is required for DNA-binding activity and dimerization. Serine phosphorylation is also required for maximal transcriptional activity. Tyrosine phosphorylated in response to signaling via activated FLT3; wild-type FLT3 results in much weaker phosphorylation than constitutively activated mutant FLT3. Alternatively, can be phosphorylated by JAK2 at Tyr-694. ISGylated.

It localises to the cytoplasm. Its subcellular location is the nucleus. Its function is as follows. Carries out a dual function: signal transduction and activation of transcription. Mediates cellular responses to the cytokine KITLG/SCF and other growth factors. Mediates cellular responses to ERBB4. May mediate cellular responses to activated FGFR1, FGFR2, FGFR3 and FGFR4. Binds to the GAS element and activates PRL-induced transcription. Regulates the expression of milk proteins during lactation. The polypeptide is Signal transducer and activator of transcription 5A (STAT5A) (Homo sapiens (Human)).